Here is a 135-residue protein sequence, read N- to C-terminus: Transcription antitermination protein NusB (135 aa).

Belongs to the NusB family.

Functionally, involved in transcription antitermination. Required for transcription of ribosomal RNA (rRNA) genes. Binds specifically to the boxA antiterminator sequence of the ribosomal RNA (rrn) operons. This is Transcription antitermination protein NusB from Lacticaseibacillus paracasei (strain ATCC 334 / BCRC 17002 / CCUG 31169 / CIP 107868 / KCTC 3260 / NRRL B-441) (Lactobacillus paracasei).